The primary structure comprises 131 residues: Acyl carrier protein 3, mitochondrial (131 aa).

A mitochondrion-targeting transit peptide spans 1 to 39; that stretch reads MHCIRSSILQHLRLRVSVRPTSLLQNENGFKSIGIFNFT. The Carrier domain occupies 49–124; the sequence is DQILSRVIEL…DVATYILSET (76 aa). At serine 84 the chain carries O-(pantetheine 4'-phosphoryl)serine.

It belongs to the acyl carrier protein (ACP) family. Complex I is composed of at least 49 different subunits. 4'-phosphopantetheine is transferred from CoA to a specific serine of the apo-ACP-like protein.

The protein resides in the mitochondrion. It participates in lipid metabolism; fatty acid biosynthesis. Its function is as follows. Carrier of the growing fatty acid chain in fatty acid biosynthesis. May be involved in the synthesis of short and medium chain fatty acids. Accessory and non-catalytic subunit of the mitochondrial membrane respiratory chain NADH dehydrogenase (Complex I), which functions in the transfer of electrons from NADH to the respiratory chain. This Arabidopsis thaliana (Mouse-ear cress) protein is Acyl carrier protein 3, mitochondrial (MTACP2).